The chain runs to 250 residues: Putative B3 domain-containing protein At4g03170 (250 aa).

Polar residues predominate over residues 1–12; sequence MANSTGKPTSST. The tract at residues 1–90 is disordered; sequence MANSTGKPTS…EKNQPKRFKK (90 aa). The segment covering 34–56 has biased composition (acidic residues); the sequence is DREEDIDDEDDIDDEVIDDEDYE. A compositionally biased stretch (basic and acidic residues) spans 72–84; sequence QSREREEETEKNQ. Positions 137-245 form a DNA-binding region, TF-B3; it reads KKQLMSSDVD…KLCFAIHYVK (109 aa).

The protein localises to the nucleus. This is Putative B3 domain-containing protein At4g03170 from Arabidopsis thaliana (Mouse-ear cress).